Here is a 267-residue protein sequence, read N- to C-terminus: Zinc finger protein ZAT1 (267 aa).

A C2H2-type 1 zinc finger spans residues H5 to H27. Disordered regions lie at residues P34–K99 and S181–S204. The span at Q52 to K62 shows a compositional bias: basic and acidic residues. A compositionally biased stretch (basic residues) spans K63 to R73. A compositionally biased stretch (basic and acidic residues) spans Q83–D97. 2 consecutive C2H2-type zinc fingers follow at residues F160–H182 and H209–H231.

Its subcellular location is the nucleus. Functionally, probable transcription factor that may be involved in stress responses. The chain is Zinc finger protein ZAT1 (ZAT1) from Arabidopsis thaliana (Mouse-ear cress).